Consider the following 156-residue polypeptide: Cyclic pyranopterin monophosphate synthase (156 aa).

Residues 73–75 and 110–111 contribute to the substrate site; these read LCH and ME. D125 is an active-site residue.

Belongs to the MoaC family. Homohexamer; trimer of dimers.

It catalyses the reaction (8S)-3',8-cyclo-7,8-dihydroguanosine 5'-triphosphate = cyclic pyranopterin phosphate + diphosphate. Its pathway is cofactor biosynthesis; molybdopterin biosynthesis. Functionally, catalyzes the conversion of (8S)-3',8-cyclo-7,8-dihydroguanosine 5'-triphosphate to cyclic pyranopterin monophosphate (cPMP). The sequence is that of Cyclic pyranopterin monophosphate synthase from Pseudomonas putida (strain W619).